We begin with the raw amino-acid sequence, 180 residues long: NAD(P)H-quinone oxidoreductase subunit I, chloroplastic (180 aa).

2 4Fe-4S ferredoxin-type domains span residues 55–84 (GRIH…VDWR) and 95–124 (LNYS…MTEE). [4Fe-4S] cluster is bound by residues C64, C67, C70, C74, C104, C107, C110, and C114.

This sequence belongs to the complex I 23 kDa subunit family. NDH is composed of at least 16 different subunits, 5 of which are encoded in the nucleus. The cofactor is [4Fe-4S] cluster.

The protein localises to the plastid. It localises to the chloroplast thylakoid membrane. The catalysed reaction is a plastoquinone + NADH + (n+1) H(+)(in) = a plastoquinol + NAD(+) + n H(+)(out). The enzyme catalyses a plastoquinone + NADPH + (n+1) H(+)(in) = a plastoquinol + NADP(+) + n H(+)(out). Functionally, NDH shuttles electrons from NAD(P)H:plastoquinone, via FMN and iron-sulfur (Fe-S) centers, to quinones in the photosynthetic chain and possibly in a chloroplast respiratory chain. The immediate electron acceptor for the enzyme in this species is believed to be plastoquinone. Couples the redox reaction to proton translocation, and thus conserves the redox energy in a proton gradient. The chain is NAD(P)H-quinone oxidoreductase subunit I, chloroplastic from Dioscorea elephantipes (Elephant's foot yam).